The following is a 347-amino-acid chain: S-adenosylmethionine:tRNA ribosyltransferase-isomerase (347 aa).

It belongs to the QueA family. In terms of assembly, monomer.

It is found in the cytoplasm. It carries out the reaction 7-aminomethyl-7-carbaguanosine(34) in tRNA + S-adenosyl-L-methionine = epoxyqueuosine(34) in tRNA + adenine + L-methionine + 2 H(+). It functions in the pathway tRNA modification; tRNA-queuosine biosynthesis. Its function is as follows. Transfers and isomerizes the ribose moiety from AdoMet to the 7-aminomethyl group of 7-deazaguanine (preQ1-tRNA) to give epoxyqueuosine (oQ-tRNA). The sequence is that of S-adenosylmethionine:tRNA ribosyltransferase-isomerase from Erythrobacter litoralis (strain HTCC2594).